A 156-amino-acid polypeptide reads, in one-letter code: Small ribosomal subunit protein uS7 (156 aa).

Belongs to the universal ribosomal protein uS7 family. As to quaternary structure, part of the 30S ribosomal subunit. Contacts proteins S9 and S11.

One of the primary rRNA binding proteins, it binds directly to 16S rRNA where it nucleates assembly of the head domain of the 30S subunit. Is located at the subunit interface close to the decoding center, probably blocks exit of the E-site tRNA. This Mannheimia succiniciproducens (strain KCTC 0769BP / MBEL55E) protein is Small ribosomal subunit protein uS7.